A 296-amino-acid polypeptide reads, in one-letter code: Transcription factor bHLH99 (296 aa).

The 52-residue stretch at 99-150 (NQRMNHIAVERNRRKQMNHFLSILKSMMPLSYSQPNDQASIIEGTISYLKKL) folds into the bHLH domain.

Homodimer. As to expression, expressed constitutively in roots, stems, and flowers.

It is found in the nucleus. In Arabidopsis thaliana (Mouse-ear cress), this protein is Transcription factor bHLH99 (BHLH99).